Here is a 406-residue protein sequence, read N- to C-terminus: Pygopus homolog 2 (406 aa).

2 disordered regions span residues 1–73 and 106–323; these read MAAS…DHLV and VQGG…PQPP. The residue at position 2 (Ala-2) is an N-acetylalanine. Ser-40 carries the phosphoserine modification. The Nuclear localization signal signature appears at 41–47; that stretch reads PEKKRRK. Composition is skewed to pro residues over residues 131 to 141 and 149 to 158; these read RQPPPFPPNPM and PQGPGYPPPG. A compositionally biased stretch (polar residues) spans 164 to 179; the sequence is SQPFNQPLGQNFSPPS. Residues 236–252 show a composition bias toward pro residues; it reads SLPPNTSPFPGPDPGFP. The segment covering 285–296 has biased composition (polar residues); sequence NGNQPSFPPNSS. Thr-302 is subject to Phosphothreonine. The PHD-type zinc finger occupies 327 to 385; it reads VYPCGACRSEVNDDQDAILCEASCQKWFHRECTGMTESAYGLLTTEASAVWACDLCLKT.

As to quaternary structure, binds to BCL9 via the PHD-type zinc finger motif, and thereby becomes part of the nuclear beta-catenin/TCF complex.

The protein localises to the nucleus. Involved in signal transduction through the Wnt pathway. This Homo sapiens (Human) protein is Pygopus homolog 2 (PYGO2).